The primary structure comprises 115 residues: Divalent-cation tolerance protein CutA (115 aa).

Cys19, His86, and His87 together coordinate Cu cation.

It belongs to the CutA family. Homotrimer. Requires Cu cation as cofactor.

The protein localises to the cytoplasm. In terms of biological role, involved in resistance toward heavy metals. The protein is Divalent-cation tolerance protein CutA of Citrobacter koseri (strain ATCC BAA-895 / CDC 4225-83 / SGSC4696).